Consider the following 101-residue polypeptide: Small ribosomal subunit protein uS14 (101 aa).

The interval Ser-32–Thr-67 is disordered. Over residues Asp-33–Ala-44 the composition is skewed to basic and acidic residues.

Belongs to the universal ribosomal protein uS14 family. In terms of assembly, part of the 30S ribosomal subunit. Contacts proteins S3 and S10.

Binds 16S rRNA, required for the assembly of 30S particles and may also be responsible for determining the conformation of the 16S rRNA at the A site. The sequence is that of Small ribosomal subunit protein uS14 from Paracidovorax citrulli (strain AAC00-1) (Acidovorax citrulli).